The primary structure comprises 907 residues: HMG box transcription factor BBX (907 aa).

Residues 1–19 (MKGSNRNKDHSTEGEGDGK) show a composition bias toward basic and acidic residues. Disordered regions lie at residues 1–24 (MKGSNRNKDHSTEGEGDGKRPKRK), 37–80 (LDFS…EQRA), 152–185 (TTNKPVKSPTPTVNPRKKLWAFPPDSSRDLPTPK), and 220–242 (TPEASSGTCRPDISESPELRQKS). Acidic residues-rich tracts occupy residues 39–52 (FSEEEEEDEEEEDI) and 61–75 (DGLEQDVAETEDDES). The HMG box DNA-binding region spans 80–148 (ARRPMNAFLL…AFMKANPGYR (69 aa)). A compositionally biased stretch (polar residues) spans 152–164 (TTNKPVKSPTPTV). Serine 242 carries the post-translational modification Phosphoserine. Lysine 384 participates in a covalent cross-link: Glycyl lysine isopeptide (Lys-Gly) (interchain with G-Cter in SUMO2). 3 disordered regions span residues 435-483 (IIED…DIES), 495-612 (DWGV…SERS), and 628-672 (TSLR…KKFK). Residues 447–457 (KIKKKKKKNKL) are compositionally biased toward basic residues. Serine 476 and serine 483 each carry phosphoserine. Basic and acidic residues-rich tracts occupy residues 496–506 (WGVDKLGETPR) and 534–550 (KKVSKEKCSDITKESRP). Residue lysine 571 forms a Glycyl lysine isopeptide (Lys-Gly) (interchain with G-Cter in SUMO2) linkage. Positions 591 to 612 (KPEDSDCHRKTETCGSRKSERS) are enriched in basic and acidic residues. Positions 656 to 668 (ESWTFNQSGTSGS) are enriched in polar residues. Lysine 693 participates in a covalent cross-link: Glycyl lysine isopeptide (Lys-Gly) (interchain with G-Cter in SUMO2). Serine 701 bears the Phosphoserine mark. Disordered regions lie at residues 708–736 (KCVSTPRKKKKTGNMSSESTKTSKGSGDK), 769–854 (NALS…SSTP), and 877–907 (VHRGQRSTPLTHDGQPKEMPQAPVLISCADQ). The span at 723–732 (SSESTKTSKG) shows a compositional bias: low complexity. The segment covering 772-783 (SIPNTPEPTTMQ) has biased composition (polar residues). Serine 789 carries the phosphoserine modification. Residues 790-801 (QKRKARKTKITH) show a composition bias toward basic residues. A Phosphoserine modification is found at serine 811.

Its subcellular location is the nucleus. Functionally, transcription factor that is necessary for cell cycle progression from G1 to S phase. The sequence is that of HMG box transcription factor BBX (Bbx) from Mus musculus (Mouse).